A 169-amino-acid polypeptide reads, in one-letter code: Peptide deformylase (169 aa).

Cysteine 91 and histidine 133 together coordinate Fe cation. The active site involves glutamate 134. Position 137 (histidine 137) interacts with Fe cation.

Belongs to the polypeptide deformylase family. The cofactor is Fe(2+).

The enzyme catalyses N-terminal N-formyl-L-methionyl-[peptide] + H2O = N-terminal L-methionyl-[peptide] + formate. Its function is as follows. Removes the formyl group from the N-terminal Met of newly synthesized proteins. Requires at least a dipeptide for an efficient rate of reaction. N-terminal L-methionine is a prerequisite for activity but the enzyme has broad specificity at other positions. In Enterobacter sp. (strain 638), this protein is Peptide deformylase.